A 66-amino-acid polypeptide reads, in one-letter code: Large ribosomal subunit protein uL29 (66 aa).

It belongs to the universal ribosomal protein uL29 family.

This is Large ribosomal subunit protein uL29 from Francisella philomiragia subsp. philomiragia (strain ATCC 25017 / CCUG 19701 / FSC 153 / O#319-036).